A 200-amino-acid chain; its full sequence is Probable nicotinate-nucleotide adenylyltransferase (200 aa).

Belongs to the NadD family.

The catalysed reaction is nicotinate beta-D-ribonucleotide + ATP + H(+) = deamido-NAD(+) + diphosphate. The protein operates within cofactor biosynthesis; NAD(+) biosynthesis; deamido-NAD(+) from nicotinate D-ribonucleotide: step 1/1. Functionally, catalyzes the reversible adenylation of nicotinate mononucleotide (NaMN) to nicotinic acid adenine dinucleotide (NaAD). The polypeptide is Probable nicotinate-nucleotide adenylyltransferase (Clostridium novyi (strain NT)).